Here is a 146-residue protein sequence, read N- to C-terminus: Ribosome-binding factor A (146 aa).

Positions 122–146 (QQQFGSVDDVTENDIDEADDTEGKA) are disordered. Residues 130–146 (DVTENDIDEADDTEGKA) are compositionally biased toward acidic residues.

It belongs to the RbfA family. In terms of assembly, monomer. Binds 30S ribosomal subunits, but not 50S ribosomal subunits or 70S ribosomes.

The protein resides in the cytoplasm. Its function is as follows. One of several proteins that assist in the late maturation steps of the functional core of the 30S ribosomal subunit. Associates with free 30S ribosomal subunits (but not with 30S subunits that are part of 70S ribosomes or polysomes). Required for efficient processing of 16S rRNA. May interact with the 5'-terminal helix region of 16S rRNA. In Shewanella sp. (strain MR-7), this protein is Ribosome-binding factor A.